We begin with the raw amino-acid sequence, 562 residues long: Arginine--tRNA ligase (562 aa).

Positions 129–139 (ANPTGPLHVGH) match the 'HIGH' region motif.

This sequence belongs to the class-I aminoacyl-tRNA synthetase family. As to quaternary structure, monomer.

Its subcellular location is the cytoplasm. It carries out the reaction tRNA(Arg) + L-arginine + ATP = L-arginyl-tRNA(Arg) + AMP + diphosphate. The polypeptide is Arginine--tRNA ligase (argS) (Xylella fastidiosa (strain 9a5c)).